The chain runs to 241 residues: Triosephosphate isomerase (241 aa).

A substrate-binding site is contributed by 9 to 11 (NWK). Catalysis depends on H96, which acts as the Electrophile. E165 functions as the Proton acceptor in the catalytic mechanism. Substrate contacts are provided by residues G171, S204, and 225-226 (GG).

It belongs to the triosephosphate isomerase family. Homodimer.

The protein resides in the cytoplasm. It catalyses the reaction D-glyceraldehyde 3-phosphate = dihydroxyacetone phosphate. The protein operates within carbohydrate biosynthesis; gluconeogenesis. It functions in the pathway carbohydrate degradation; glycolysis; D-glyceraldehyde 3-phosphate from glycerone phosphate: step 1/1. In terms of biological role, involved in the gluconeogenesis. Catalyzes stereospecifically the conversion of dihydroxyacetone phosphate (DHAP) to D-glyceraldehyde-3-phosphate (G3P). The protein is Triosephosphate isomerase of Prochlorococcus marinus subsp. pastoris (strain CCMP1986 / NIES-2087 / MED4).